A 269-amino-acid chain; its full sequence is Zinc transporter ZupT (269 aa).

The next 8 membrane-spanning stretches (helical) occupy residues 12-32, 41-61, 75-95, 126-146, 152-172, 187-207, 211-231, and 249-269; these read AFSI…LVMF, LSFG…TEIF, DHAF…IALI, MMAA…TFFA, AVGM…GISI, VWAC…GYLV, FLSP…MVFL, and TVYG…LFHF. Positions 136 and 139 each coordinate Fe(2+). Residues Glu-139 and His-164 each coordinate Zn(2+). Fe(2+)-binding residues include Asn-165, Glu-168, and Glu-197. Zn(2+) is bound at residue Glu-168.

This sequence belongs to the ZIP transporter (TC 2.A.5) family. ZupT subfamily.

It localises to the cell inner membrane. It catalyses the reaction Zn(2+)(in) = Zn(2+)(out). Functionally, mediates zinc uptake. May also transport other divalent cations. The sequence is that of Zinc transporter ZupT from Neisseria meningitidis serogroup A / serotype 4A (strain DSM 15465 / Z2491).